We begin with the raw amino-acid sequence, 85 residues long: Large ribosomal subunit protein bL27 (85 aa).

The tract at residues 1-20 (MATKKAGGSTRNGRDSEAKR) is disordered.

It belongs to the bacterial ribosomal protein bL27 family.

This chain is Large ribosomal subunit protein bL27, found in Actinobacillus pleuropneumoniae serotype 5b (strain L20).